The primary structure comprises 391 residues: Phosphoglycerate kinase (391 aa).

Substrate is bound by residues 16-18 (DLN), R31, 54-57 (HLGR), R108, and R141. Residues K192, E314, and 340–343 (GGDT) contribute to the ATP site.

This sequence belongs to the phosphoglycerate kinase family. In terms of assembly, monomer.

The protein resides in the cytoplasm. It carries out the reaction (2R)-3-phosphoglycerate + ATP = (2R)-3-phospho-glyceroyl phosphate + ADP. It functions in the pathway carbohydrate degradation; glycolysis; pyruvate from D-glyceraldehyde 3-phosphate: step 2/5. This chain is Phosphoglycerate kinase, found in Coxiella burnetii (strain RSA 493 / Nine Mile phase I).